We begin with the raw amino-acid sequence, 141 residues long: Ribonuclease VapC38 (141 aa).

Mg(2+)-binding residues include Asp5 and Asp102.

Belongs to the PINc/VapC protein family. It depends on Mg(2+) as a cofactor.

The protein resides in the secreted. In terms of biological role, toxic component of a type II toxin-antitoxin (TA) system. An RNase. Its cognate antitoxin is VapB38. In Mycobacterium tuberculosis (strain ATCC 25618 / H37Rv), this protein is Ribonuclease VapC38.